The following is a 360-amino-acid chain: MGSLEAERKTTGWAARDPSGVLSPYTYTLRETGPEDVFIKIIYCGICHTDIHQIKNDLGASNYPMVPGHEVVGEVVEVGSDVTKFKVGDCVGDGTIVGCCKTCRPCKADVEQYCNKKIWSYNDVYTDGKPTQGGFSGHMVVDQKFVVKIPDGMAPEQAAPLLCAGVTVYSPLTHFGLKEISGLRGGILGLGGVGHMGVKLAKAMGHHVTVISSSDKKKEEAIDHLGADAYLVSSDATQMQEAADSLDYIIDTVPVFHPLEPYLSLLKLDGKLILMGVINTPLQFISPMVMLGRKAITGSFIGSMKETEEMLDFCNEKGITSTIEVVKMDYINTAFERLEKNDVRYRFVVDVAGSKLDQET.

Residue cysteine 47 coordinates Zn(2+). Position 49 (threonine 49) interacts with NADP(+). The Zn(2+) site is built by histidine 69, glutamate 70, cysteine 100, cysteine 103, cysteine 106, cysteine 114, and cysteine 163. Residues threonine 167, 189-194 (GLGGVG), 212-217 (SSSDKK), threonine 252, glycine 276, and 299-301 (SFI) each bind NADP(+).

Belongs to the zinc-containing alcohol dehydrogenase family. As to quaternary structure, homodimer. It depends on Zn(2+) as a cofactor.

It carries out the reaction (E)-cinnamyl alcohol + NADP(+) = (E)-cinnamaldehyde + NADPH + H(+). It catalyses the reaction (E)-coniferol + NADP(+) = (E)-coniferaldehyde + NADPH + H(+). The enzyme catalyses (E)-sinapyl alcohol + NADP(+) = (E)-sinapaldehyde + NADPH + H(+). The catalysed reaction is (E)-4-coumaroyl alcohol + NADP(+) = (E)-4-coumaraldehyde + NADPH + H(+). It carries out the reaction (E)-caffeyl alcohol + NADP(+) = (E)-caffeyl aldehyde + NADPH + H(+). Its pathway is aromatic compound metabolism; phenylpropanoid biosynthesis. Involved in lignin biosynthesis. Catalyzes the final step specific for the production of lignin monomers. Catalyzes the NADPH-dependent reduction of coniferaldehyde, 5-hydroxyconiferaldehyde, sinapaldehyde, 4-coumaraldehyde and caffeyl aldehyde to their respective alcohols. In Aralia cordata (Udo), this protein is Probable cinnamyl alcohol dehydrogenase 1 (CAD1).